Reading from the N-terminus, the 327-residue chain is Deoxynucleotidyltransferase terminal-interacting protein 1 (327 aa).

Residues Met1 to Arg11 are compositionally biased toward gly residues. Disordered regions lie at residues Met1 to Thr34 and Lys146 to His172. Residues Met55–Lys146 are important for dimerization. The span at Lys146 to Phe161 shows a compositional bias: basic and acidic residues. Residues Arg157–Gly171 constitute a DNA-binding region (a.T hook). Residues Pro162–Gly168 carry the Nuclear localization signal motif. Residues Arg195–Thr314 are important for DNA and nucleosome binding. A DNA-binding region (H-T-H motif) is located at residues Gly214–Pro235.

Monomer and homodimer. A minor proportion may form homotrimers. Interacts with ZNF541. Interacts with the terminal deoxynucleotidyltransferase DNTT. Interacts with TRERF1. Identified in a histone deacetylase complex that contains DNTTIP1, HDAC1 and MIDEAS; this complex assembles into a tetramer that contains four copies of each protein chain. Component of a histone deacetylase complex containing DNTTIP1, ZNF541, HDAC1 and HDAC2. Identified in a complex with KCTD19, HDAC1, HDAC2 and ZNF541. Expressed in thymus, bone marrow and spleen.

The protein localises to the nucleus. Its function is as follows. Increases DNTT terminal deoxynucleotidyltransferase activity (in vitro). Also acts as a transcriptional regulator, binding to the consensus sequence 5'-GNTGCATG-3' following an AT-tract. Associates with RAB20 promoter and positively regulates its transcription. Binds DNA and nucleosomes; may recruit HDAC1 complexes to nucleosomes or naked DNA. The sequence is that of Deoxynucleotidyltransferase terminal-interacting protein 1 (Dnttip1) from Rattus norvegicus (Rat).